Here is a 136-residue protein sequence, read N- to C-terminus: Ribosome-binding factor A (136 aa).

The segment at 1–22 (MNTAGPAGKLAGHAASGPTQRQ) is disordered.

Belongs to the RbfA family. In terms of assembly, monomer. Binds 30S ribosomal subunits, but not 50S ribosomal subunits or 70S ribosomes.

It localises to the cytoplasm. One of several proteins that assist in the late maturation steps of the functional core of the 30S ribosomal subunit. Associates with free 30S ribosomal subunits (but not with 30S subunits that are part of 70S ribosomes or polysomes). Required for efficient processing of 16S rRNA. May interact with the 5'-terminal helix region of 16S rRNA. This chain is Ribosome-binding factor A, found in Gluconacetobacter diazotrophicus (strain ATCC 49037 / DSM 5601 / CCUG 37298 / CIP 103539 / LMG 7603 / PAl5).